We begin with the raw amino-acid sequence, 299 residues long: Cytosolic sulfotransferase 1 (299 aa).

51 to 56 lines the 3'-phosphoadenylyl sulfate pocket; it reads KAGTTW. The active-site Proton acceptor is His-113. Residues Arg-135, Ser-143, Tyr-199, 233–238, and 261–263 each bind 3'-phosphoadenylyl sulfate; these read VQFDAM and RKG.

Belongs to the sulfotransferase 1 family. As to expression, expressed in liver.

It localises to the cytoplasm. Inhibited by Co(2+), Zn(2+), Cd(2+) and Pb(2+) ions. Inactivated by Hg(2+) and Cu(2+) ions. Its function is as follows. Sulfotransferase that utilizes 3'-phospho-5'-adenylyl sulfate (PAPS) as sulfonate donor to catalyze the sulfate conjugation of a variety of xenobiotic and endogenous compounds, including 2-naphthol, hydroxychlorobiphenyls, dopamine and T3 (triiodo-L-thyronine). The polypeptide is Cytosolic sulfotransferase 1 (Danio rerio (Zebrafish)).